A 603-amino-acid chain; its full sequence is Adenine deaminase (603 aa).

Belongs to the metallo-dependent hydrolases superfamily. Adenine deaminase family. It depends on Mn(2+) as a cofactor.

It catalyses the reaction adenine + H2O + H(+) = hypoxanthine + NH4(+). The sequence is that of Adenine deaminase from Ruegeria pomeroyi (strain ATCC 700808 / DSM 15171 / DSS-3) (Silicibacter pomeroyi).